Reading from the N-terminus, the 236-residue chain is Small ribosomal subunit protein uS2c (236 aa).

Belongs to the universal ribosomal protein uS2 family.

The protein localises to the plastid. The protein resides in the chloroplast. This chain is Small ribosomal subunit protein uS2c (rps2), found in Helianthus annuus (Common sunflower).